We begin with the raw amino-acid sequence, 500 residues long: L-arabinose isomerase (500 aa).

Glu-306, Glu-333, His-349, and His-448 together coordinate Mn(2+).

It belongs to the arabinose isomerase family. Mn(2+) serves as cofactor.

The enzyme catalyses beta-L-arabinopyranose = L-ribulose. The protein operates within carbohydrate degradation; L-arabinose degradation via L-ribulose; D-xylulose 5-phosphate from L-arabinose (bacterial route): step 1/3. Functionally, catalyzes the conversion of L-arabinose to L-ribulose. The protein is L-arabinose isomerase of Shewanella sp. (strain MR-7).